Consider the following 732-residue polypeptide: Polyribonucleotide nucleotidyltransferase (732 aa).

The Mg(2+) site is built by aspartate 516 and aspartate 522. Positions 582-642 constitute a KH domain; that stretch reads PSSHTITVHP…PKVIAACDYI (61 aa). Residues 659–726 form the S1 motif domain; it reads GDILKGKIKR…KGHKIELGLR (68 aa).

Belongs to the polyribonucleotide nucleotidyltransferase family. Requires Mg(2+) as cofactor.

The protein localises to the cytoplasm. The enzyme catalyses RNA(n+1) + phosphate = RNA(n) + a ribonucleoside 5'-diphosphate. In terms of biological role, involved in mRNA degradation. Catalyzes the phosphorolysis of single-stranded polyribonucleotides processively in the 3'- to 5'-direction. This Nitratiruptor sp. (strain SB155-2) protein is Polyribonucleotide nucleotidyltransferase.